A 218-amino-acid polypeptide reads, in one-letter code: Uracil-DNA glycosylase (218 aa).

Asp59 serves as the catalytic Proton acceptor.

It belongs to the uracil-DNA glycosylase (UDG) superfamily. UNG family.

The protein localises to the cytoplasm. The enzyme catalyses Hydrolyzes single-stranded DNA or mismatched double-stranded DNA and polynucleotides, releasing free uracil.. Excises uracil residues from the DNA which can arise as a result of misincorporation of dUMP residues by DNA polymerase or due to deamination of cytosine. In Staphylococcus saprophyticus subsp. saprophyticus (strain ATCC 15305 / DSM 20229 / NCIMB 8711 / NCTC 7292 / S-41), this protein is Uracil-DNA glycosylase.